Reading from the N-terminus, the 639-residue chain is Kinesin-like protein KIF22 (639 aa).

Positions 18-345 constitute a Kinesin motor domain; that stretch reads RVRVAVRLRP…LNFAAKSKQI (328 aa). 102 to 109 contacts ATP; it reads GPTGAGKT. Residues 358-400 form a disordered region; the sequence is IAALPAMKRPREEAETAAGSRQRKKSKTDSTESSPNTSMDAAS. Positions 388 to 397 are enriched in polar residues; it reads TESSPNTSMD. The stretch at 439–484 forms a coiled coil; sequence KRERMALLKKWEESQMEIERLKEKQKELEQKAIEAEARLEKSTNSD. The Important for regulated proteolytic degradation motif lies at 549-552; that stretch reads GREN.

The protein belongs to the TRAFAC class myosin-kinesin ATPase superfamily. Kinesin family. Post-translationally, ubiquitinated, leading to its subsequent proteasomal degradation.

It is found in the nucleus. The protein resides in the cytoplasm. The protein localises to the cytoskeleton. Functionally, kinesin family member that is involved in spindle formation and the movements of chromosomes during mitosis and meiosis. Binds to microtubules and to DNA. This is Kinesin-like protein KIF22 (kif22) from Xenopus tropicalis (Western clawed frog).